The primary structure comprises 280 residues: Bis(5'-nucleosyl)-tetraphosphatase, symmetrical (280 aa).

This sequence belongs to the Ap4A hydrolase family.

It catalyses the reaction P(1),P(4)-bis(5'-adenosyl) tetraphosphate + H2O = 2 ADP + 2 H(+). Its function is as follows. Hydrolyzes diadenosine 5',5'''-P1,P4-tetraphosphate to yield ADP. This Escherichia coli O17:K52:H18 (strain UMN026 / ExPEC) protein is Bis(5'-nucleosyl)-tetraphosphatase, symmetrical.